The following is a 136-amino-acid chain: 6,7-dimethyl-8-ribityllumazine synthase (136 aa).

Residues F11, 43–45, and 67–69 each bind 5-amino-6-(D-ribitylamino)uracil; these read SFD and AVI. Residue 72-73 participates in (2S)-2-hydroxy-3-oxobutyl phosphate binding; it reads ET. The active-site Proton donor is the H75. L100 provides a ligand contact to 5-amino-6-(D-ribitylamino)uracil. R115 contacts (2S)-2-hydroxy-3-oxobutyl phosphate.

It belongs to the DMRL synthase family.

The catalysed reaction is (2S)-2-hydroxy-3-oxobutyl phosphate + 5-amino-6-(D-ribitylamino)uracil = 6,7-dimethyl-8-(1-D-ribityl)lumazine + phosphate + 2 H2O + H(+). It participates in cofactor biosynthesis; riboflavin biosynthesis; riboflavin from 2-hydroxy-3-oxobutyl phosphate and 5-amino-6-(D-ribitylamino)uracil: step 1/2. In terms of biological role, catalyzes the formation of 6,7-dimethyl-8-ribityllumazine by condensation of 5-amino-6-(D-ribitylamino)uracil with 3,4-dihydroxy-2-butanone 4-phosphate. This is the penultimate step in the biosynthesis of riboflavin. The sequence is that of 6,7-dimethyl-8-ribityllumazine synthase from Picrophilus torridus (strain ATCC 700027 / DSM 9790 / JCM 10055 / NBRC 100828 / KAW 2/3).